The chain runs to 119 residues: Large ribosomal subunit protein bL19 (119 aa).

Belongs to the bacterial ribosomal protein bL19 family.

Its function is as follows. This protein is located at the 30S-50S ribosomal subunit interface and may play a role in the structure and function of the aminoacyl-tRNA binding site. In Mycoplasma pneumoniae (strain ATCC 29342 / M129 / Subtype 1) (Mycoplasmoides pneumoniae), this protein is Large ribosomal subunit protein bL19 (rplS).